Reading from the N-terminus, the 464-residue chain is Septin homolog spn5 (464 aa).

The segment at 28–91 is disordered; sequence QVDESSAKRS…VPNSNGKSIP (64 aa). Composition is skewed to basic and acidic residues over residues 41–54 and 69–81; these read ESRK…KEQI and TAKD…KQDE. A Septin-type G domain is found at 115-370; sequence NGIDINLIVV…DTFRTEKLVA (256 aa). The G1 motif stretch occupies residues 125–132; sequence GESSLGKT. Residues 125-132, threonine 151, glycine 177, 257-265, glycine 304, and arginine 319 contribute to the GTP site; these read GESSLGKT and KADTMTSDE. Residues 174–177 form a G3 motif region; that stretch reads DTPG. The G4 motif stretch occupies residues 256-259; it reads GKAD. Residues 396-453 are a coiled coil; the sequence is LVEEALTKVMKEKYREKENNLELLETNLKTHHKDYKHALKKRITALEEEKNRLIKEIG.

This sequence belongs to the TRAFAC class TrmE-Era-EngA-EngB-Septin-like GTPase superfamily. Septin GTPase family. In terms of assembly, component of the sporulation-specific septin complex composed of at least spn2, spn5, spn6 and spn7.

Its subcellular location is the nucleus. It localises to the forespore membrane. Its function is as follows. Septin-like protein involved in the correct orientation of forespore membrane extension during sporulation. The protein is Septin homolog spn5 (spn5) of Schizosaccharomyces pombe (strain 972 / ATCC 24843) (Fission yeast).